The primary structure comprises 140 residues: Nucleoside diphosphate kinase (140 aa).

ATP contacts are provided by lysine 11, phenylalanine 59, arginine 87, threonine 93, arginine 104, and asparagine 114. Histidine 117 functions as the Pros-phosphohistidine intermediate in the catalytic mechanism.

It belongs to the NDK family. As to quaternary structure, homotetramer. The cofactor is Mg(2+).

Its subcellular location is the cytoplasm. It carries out the reaction a 2'-deoxyribonucleoside 5'-diphosphate + ATP = a 2'-deoxyribonucleoside 5'-triphosphate + ADP. The catalysed reaction is a ribonucleoside 5'-diphosphate + ATP = a ribonucleoside 5'-triphosphate + ADP. Major role in the synthesis of nucleoside triphosphates other than ATP. The ATP gamma phosphate is transferred to the NDP beta phosphate via a ping-pong mechanism, using a phosphorylated active-site intermediate. The sequence is that of Nucleoside diphosphate kinase from Rhodospirillum rubrum (strain ATCC 11170 / ATH 1.1.1 / DSM 467 / LMG 4362 / NCIMB 8255 / S1).